A 188-amino-acid polypeptide reads, in one-letter code: HGPRTase-like protein 1 (188 aa).

It belongs to the purine/pyrimidine phosphoribosyltransferase family. Archaeal HPRT subfamily.

Its function is as follows. May catalyze a purine salvage reaction, the substrate is unknown. The sequence is that of HGPRTase-like protein 1 from Haloferax volcanii (strain ATCC 29605 / DSM 3757 / JCM 8879 / NBRC 14742 / NCIMB 2012 / VKM B-1768 / DS2) (Halobacterium volcanii).